Consider the following 317-residue polypeptide: Porphobilinogen deaminase (317 aa).

S-(dipyrrolylmethanemethyl)cysteine is present on Cys245.

The protein belongs to the HMBS family. In terms of assembly, monomer. Dipyrromethane is required as a cofactor.

It carries out the reaction 4 porphobilinogen + H2O = hydroxymethylbilane + 4 NH4(+). The protein operates within porphyrin-containing compound metabolism; protoporphyrin-IX biosynthesis; coproporphyrinogen-III from 5-aminolevulinate: step 2/4. Its pathway is porphyrin-containing compound metabolism; chlorophyll biosynthesis. In terms of biological role, tetrapolymerization of the monopyrrole PBG into the hydroxymethylbilane pre-uroporphyrinogen in several discrete steps. The sequence is that of Porphobilinogen deaminase from Synechococcus sp. (strain CC9902).